The chain runs to 302 residues: Chloramphenicol resistance protein (302 aa).

The protein resides in the cell membrane. In terms of biological role, this protein is thought to be a membrane-associated barrier of drug uptake. The protein is Chloramphenicol resistance protein (cml) of Escherichia coli.